A 124-amino-acid polypeptide reads, in one-letter code: Large ribosomal subunit protein bL12 (124 aa).

Belongs to the bacterial ribosomal protein bL12 family. In terms of assembly, homodimer. Part of the ribosomal stalk of the 50S ribosomal subunit. Forms a multimeric L10(L12)X complex, where L10 forms an elongated spine to which 2 to 4 L12 dimers bind in a sequential fashion. Binds GTP-bound translation factors.

Forms part of the ribosomal stalk which helps the ribosome interact with GTP-bound translation factors. Is thus essential for accurate translation. The protein is Large ribosomal subunit protein bL12 of Cupriavidus metallidurans (strain ATCC 43123 / DSM 2839 / NBRC 102507 / CH34) (Ralstonia metallidurans).